A 782-amino-acid chain; its full sequence is LPS-assembly protein LptD (782 aa).

An N-terminal signal peptide occupies residues 1–23 (MNKKHTLISLAILTALYSQQSLA).

It belongs to the LptD family. Component of the lipopolysaccharide transport and assembly complex. Interacts with LptE and LptA.

The protein resides in the cell outer membrane. In terms of biological role, together with LptE, is involved in the assembly of lipopolysaccharide (LPS) at the surface of the outer membrane. This chain is LPS-assembly protein LptD, found in Haemophilus influenzae (strain ATCC 51907 / DSM 11121 / KW20 / Rd).